Here is a 48-residue protein sequence, read N- to C-terminus: MSYTRVDHPTGKMACHLRQILASPLFFANYVLHAAIHYPSSDIRGDIL.

A helical membrane pass occupies residues 20–37; the sequence is ILASPLFFANYVLHAAIH.

It is found in the membrane. This is an uncharacterized protein from Saccharomyces cerevisiae (strain ATCC 204508 / S288c) (Baker's yeast).